Reading from the N-terminus, the 261-residue chain is Transmembrane protein 106A (261 aa).

Residues 95-115 form a helical membrane-spanning segment; the sequence is VFLAVSICLVTSSLIIFFLFP.

The protein belongs to the TMEM106 family.

The protein resides in the cell membrane. In terms of biological role, activates macrophages and polarizes them into M1-like macrophages through the activation of the MAPK and NF-kappaB signaling pathway. Upon activation, up-regulates the expression of CD80, CD86, CD69 and MHC II on macrophages, and induces the release of pro-inflammatory cytokines such as TNF, IL1B, IL6, CCL2 and nitric oxide. May play a role in inhibition of proliferation and migration. This Bos taurus (Bovine) protein is Transmembrane protein 106A (TMEM106A).